Here is a 602-residue protein sequence, read N- to C-terminus: DEAD-box ATP-dependent RNA helicase 53 (602 aa).

The span at 33–43 shows a compositional bias: low complexity; that stretch reads ASPLDPCRGPA. The interval 33–76 is disordered; sequence ASPLDPCRGPAAPEPPRRRAFHGSPSPLGFRSTPASWSSPEAGA. Positions 84-112 match the Q motif motif; sequence LEVARLGISPWIVERLAARGITRLFPIQR. Positions 115–288 constitute a Helicase ATP-binding domain; sequence LDPAMQGKDM…SKYLKDPIII (174 aa). 128–135 contacts ATP; it reads ARTGTGKT. The DEAD box motif lies at 236-239; sequence DEAD. The Helicase C-terminal domain occupies 317 to 462; that stretch reads ILGPLIKEHA…LPKIEVADEA (146 aa). The disordered stretch occupies residues 503–602; it reads FGDFDGFGSS…GRSGGFDDSN (100 aa).

Belongs to the DEAD box helicase family. DDX21/DDX50 subfamily.

The catalysed reaction is ATP + H2O = ADP + phosphate + H(+). The chain is DEAD-box ATP-dependent RNA helicase 53 from Oryza sativa subsp. japonica (Rice).